We begin with the raw amino-acid sequence, 105 residues long: UPF0235 protein RT0827 (105 aa).

This sequence belongs to the UPF0235 family.

This chain is UPF0235 protein RT0827, found in Rickettsia typhi (strain ATCC VR-144 / Wilmington).